Here is a 335-residue protein sequence, read N- to C-terminus: MSWFTPEVIDVILTVVRAIVVLLAVVVCGALLSFVERRLLGWWQDRYGPNRVGPFGMFQIAADMLKMFFKEDWNPPFVDRMIFTLAPVVAMSALLIAFVVIPITPLWGVADLNIGLLFFFAMAGLSVYAVLFAGWSSNNKYALLGSLRASAQTVSYEVFLGLALMGVVVQVGSFNMRDIVEYQANNLWFIIPQFFGFCTFFIAGVAVTHRHPFDQPEAEQELADGYHIEYAGMKWGMFFVGEYIGIILISALLVTLFFGGWHGPFGILPQVPFLWFALKTAFFIMLFILLRASIPRPRYDQVMDFSWKFCLPLTLINLLVTAAVVLYNTPAVAAQ.

8 consecutive transmembrane segments (helical) span residues 11 to 31 (VILTVVRAIVVLLAVVVCGAL), 81 to 101 (MIFTLAPVVAMSALLIAFVVI), 114 to 134 (IGLLFFFAMAGLSVYAVLFAG), 154 to 174 (VSYEVFLGLALMGVVVQVGSF), 187 to 207 (LWFIIPQFFGFCTFFIAGVAV), 238 to 258 (FFVGEYIGIILISALLVTLFF), 270 to 290 (QVPFLWFALKTAFFIMLFILL), and 307 to 327 (WKFCLPLTLINLLVTAAVVLY).

Belongs to the complex I subunit 1 family. In terms of assembly, NDH-1 is composed of 13 different subunits. Subunits NuoA, H, J, K, L, M, N constitute the membrane sector of the complex.

It is found in the cell inner membrane. It catalyses the reaction a quinone + NADH + 5 H(+)(in) = a quinol + NAD(+) + 4 H(+)(out). Functionally, NDH-1 shuttles electrons from NADH, via FMN and iron-sulfur (Fe-S) centers, to quinones in the respiratory chain. The immediate electron acceptor for the enzyme in this species is believed to be ubiquinone. Couples the redox reaction to proton translocation (for every two electrons transferred, four hydrogen ions are translocated across the cytoplasmic membrane), and thus conserves the redox energy in a proton gradient. This subunit may bind ubiquinone. In Pseudomonas entomophila (strain L48), this protein is NADH-quinone oxidoreductase subunit H.